Here is a 102-residue protein sequence, read N- to C-terminus: Small ribosomal subunit protein bS18c (102 aa).

Residues 1-19 (MDKTKRPLRKSKRSFRRRL) are compositionally biased toward basic residues. Positions 1 to 26 (MDKTKRPLRKSKRSFRRRLPPPIGSG) are disordered.

This sequence belongs to the bacterial ribosomal protein bS18 family. In terms of assembly, part of the 30S ribosomal subunit.

The protein resides in the plastid. The protein localises to the chloroplast. This Piper cenocladum (Ant piper) protein is Small ribosomal subunit protein bS18c.